The following is a 371-amino-acid chain: Maltose/maltodextrin import ATP-binding protein MalK (371 aa).

The 231-residue stretch at 4–234 (VQLQNVTKAW…PADRFVAGFI (231 aa)) folds into the ABC transporter domain. Residue 36–43 (GPSGCGKS) participates in ATP binding.

Belongs to the ABC transporter superfamily. Maltooligosaccharide importer (TC 3.A.1.1.1) family. As to quaternary structure, the complex is composed of two ATP-binding proteins (MalK), two transmembrane proteins (MalG and MalK) and a solute-binding protein (MalE).

The protein localises to the cell inner membrane. It catalyses the reaction D-maltose(out) + ATP + H2O = D-maltose(in) + ADP + phosphate + H(+). Functionally, part of the ABC transporter complex MalEFGK involved in maltose/maltodextrin import. Responsible for energy coupling to the transport system. The protein is Maltose/maltodextrin import ATP-binding protein MalK of Escherichia coli O157:H7.